We begin with the raw amino-acid sequence, 365 residues long: Anhydro-N-acetylmuramic acid kinase (365 aa).

9–16 (GTSLDGVD) lines the ATP pocket.

It belongs to the anhydro-N-acetylmuramic acid kinase family.

The catalysed reaction is 1,6-anhydro-N-acetyl-beta-muramate + ATP + H2O = N-acetyl-D-muramate 6-phosphate + ADP + H(+). It participates in amino-sugar metabolism; 1,6-anhydro-N-acetylmuramate degradation. Its pathway is cell wall biogenesis; peptidoglycan recycling. Functionally, catalyzes the specific phosphorylation of 1,6-anhydro-N-acetylmuramic acid (anhMurNAc) with the simultaneous cleavage of the 1,6-anhydro ring, generating MurNAc-6-P. Is required for the utilization of anhMurNAc either imported from the medium or derived from its own cell wall murein, and thus plays a role in cell wall recycling. This chain is Anhydro-N-acetylmuramic acid kinase, found in Rhodopseudomonas palustris (strain BisB18).